Here is a 328-residue protein sequence, read N- to C-terminus: ATP synthase mitochondrial F1 complex assembly factor 1 (328 aa).

A mitochondrion-targeting transit peptide spans 1–57; it reads MAAVVVAAAGGAGPAVLQVAGLYRGLCAVRSRALGLGLVSPAQLRVFPVRPGSGRPE.

The protein belongs to the ATP11 family. Interacts with ATP5F1B; involved in the assembly of the F1 component of the mitochondrial ATP synthase (ATPase). As to expression, weakly expressed in muscle.

The protein resides in the mitochondrion inner membrane. Functionally, has a complex stabilizing activity in the assembly of the mitochondrial F1-F0 complex. This Homo sapiens (Human) protein is ATP synthase mitochondrial F1 complex assembly factor 1.